The primary structure comprises 375 residues: Ketohexokinase (375 aa).

Asp319 contacts beta-D-fructose.

This sequence belongs to the carbohydrate kinase PfkB family. In terms of assembly, homodimer.

The enzyme catalyses beta-D-fructose + ATP = beta-D-fructose 1-phosphate + ADP + H(+). It participates in carbohydrate metabolism; fructose metabolism. Activated in the presence of 0.5 M KCl. 85% activity at 3.5 M KCl. 60% activity without KCl. Functionally, catalyzes the ATP-dependent phosphorylation of the ketose sugar fructose to fructose-1-phosphate. Does not produce fructose-6-phosphate. The sugars D-glucose, D-galactose, L-rhamnose, D-xylose, L-arabinose and D-ribose are not substrates of this enzyme. The chain is Ketohexokinase from Haloferax volcanii (strain ATCC 29605 / DSM 3757 / JCM 8879 / NBRC 14742 / NCIMB 2012 / VKM B-1768 / DS2) (Halobacterium volcanii).